The chain runs to 332 residues: MSDNKALPPAILLMGPTASGKTDLAMALSERLPCDLISVDSVMVYRGMDIGSAKPDPDTLTRYPHHLIDIRDPAEPYSAAEFRTDALRLMEQSVNAGRIPLLVGGTIMYYKALCQGLGDMPSADENVRGQILAEAEQVGWPALHEQLRQVDPVAAAKIHPNNRQRIQRALEVYRLTGKPLSHYWAADGANPENELNWDSVNGAALPYNALNLALAPVKREDLHARIAKRFQIMLEQGMIDEVEQLRRRGDLNVELPSIRAVGYRQVWSYLEGEFGREEMVEKATAATRQLAKRQMTWLRSWPEINWLSADDTQLVEAAMRLISQRLQSCNPL.

15-22 (GPTASGKT) is an ATP binding site. 17 to 22 (TASGKT) serves as a coordination point for substrate. 2 interaction with substrate tRNA regions span residues 40–43 (DSVM) and 164–168 (QRIQR).

Belongs to the IPP transferase family. Monomer. The cofactor is Mg(2+).

The catalysed reaction is adenosine(37) in tRNA + dimethylallyl diphosphate = N(6)-dimethylallyladenosine(37) in tRNA + diphosphate. In terms of biological role, catalyzes the transfer of a dimethylallyl group onto the adenine at position 37 in tRNAs that read codons beginning with uridine, leading to the formation of N6-(dimethylallyl)adenosine (i(6)A). The chain is tRNA dimethylallyltransferase 2 from Hahella chejuensis (strain KCTC 2396).